The primary structure comprises 101 residues: Secreted enzymes activator (101 aa).

Residues 1–10 (MSRRRRRASA) are compositionally biased toward basic residues. Disordered stretches follow at residues 1–26 (MSRR…PYGS) and 45–101 (TRLA…NGRG). Over residues 45–60 (TRLAASSRASRAAVGS) the composition is skewed to low complexity. Residues 55–74 (RAAVGSFDGAKNRPASSRRQ) constitute a DNA-binding region (H-T-H motif).

Functionally, increases the production of several extracellular enzymes, like alkaline phosphatase, amylase, protease or lipase. When present in high concentrations, delays the production of pigments and sporulation. The chain is Secreted enzymes activator (saf) from Streptomyces griseus.